The following is a 258-amino-acid chain: Tropinone reductase-like 3 (258 aa).

19-43 (IVTASTQGIGFAIAYRLGLEGAAVV) is an NAD(+) binding site. Serine 150 lines the substrate pocket. Tyrosine 163 serves as the catalytic Proton acceptor.

It belongs to the short-chain dehydrogenases/reductases (SDR) family.

Has no tropinone reductase activity. The chain is Tropinone reductase-like 3 from Erythroxylum coca (Coca plant).